The primary structure comprises 167 residues: RNA pyrophosphohydrolase (167 aa).

One can recognise a Nudix hydrolase domain in the interval 8–158 (PYRTCVGMML…KRPVYERVVK (151 aa)). The Nudix box signature appears at 47–68 (GGVDPGEDTWEAAKRELYEETN).

Belongs to the Nudix hydrolase family. RppH subfamily. It depends on a divalent metal cation as a cofactor.

Functionally, accelerates the degradation of transcripts by removing pyrophosphate from the 5'-end of triphosphorylated RNA, leading to a more labile monophosphorylated state that can stimulate subsequent ribonuclease cleavage. This chain is RNA pyrophosphohydrolase, found in Rhodopseudomonas palustris (strain HaA2).